Here is a 180-residue protein sequence, read N- to C-terminus: uncharacterized protein (180 aa).

This is an uncharacterized protein from Rickettsia prowazekii (strain Madrid E).